The following is a 131-amino-acid chain: MSWQTYVDEHLMCEIEGHHLASAAILGHDGTVWAQSADFPQFKPEEITGIMKDFDEPGHLAPTGMFVAGAKYMVIQGEPGAVIRGKKGAGGITIKKTGQALVVGIYDEPMTPGQCNMVVERLGDYLVEQGM.

A disulfide bridge connects residues C13 and C115. Residues 81–97 (AVIRGKKGAGGITIKKT) carry the Involved in PIP2 interaction motif. Phosphothreonine is present on T111.

The protein belongs to the profilin family. Occurs in many kinds of cells as a complex with monomeric actin in a 1:1 ratio. In terms of processing, phosphorylated by MAP kinases.

It is found in the cytoplasm. The protein resides in the cytoskeleton. In terms of biological role, binds to actin and affects the structure of the cytoskeleton. At high concentrations, profilin prevents the polymerization of actin, whereas it enhances it at low concentrations. By binding to PIP2, it inhibits the formation of IP3 and DG. The protein is Profilin-2 (PRO2) of Phleum pratense (Common timothy).